The sequence spans 817 residues: B lymphocyte-induced maturation protein 1 homolog (817 aa).

A disordered region spans residues M1–R62. Over residues F15 to A61 the composition is skewed to low complexity. Positions M103–S241 constitute an SET domain. 4 consecutive C2H2-type zinc fingers follow at residues Y508–H530, F536–H558, H564–H586, and Y592–H614. The C2H2-type 5; degenerate zinc finger occupies Y620–T642. Residues L709 to P817 form a disordered region. Positions Q779–H794 are enriched in low complexity.

In terms of assembly, interacts with dre-1; the interaction targets blmp-1 for proteasomal degradation. Interacts with ldb-1 and ham-3. Ubiquitinated by the SCF(dre-1) complex, leading to its degradation by the proteasome. Expressed in hypodermal, vulval, intestinal and distal tip cells.

The protein resides in the nucleus. The protein localises to the cytoplasm. Functionally, transcription factor which binds to enhancer elements in the promoter region of genes. Regulates the expression of the transcription factor bed-3 to control vulval development. Promotes terminal differentiation in the hypodermis and is involved in regulation of gonadal outgrowth and entry into the dauer stage. Regulates the timing of dorsalward migration of the distal tip cells of the hermaphrodite gonad by inhibiting precocious unc-5 and lin-29 expression which in turn prevents early dorsalward turning. Plays a role in male tail tip morphogenesis. This chain is B lymphocyte-induced maturation protein 1 homolog, found in Caenorhabditis elegans.